Reading from the N-terminus, the 1309-residue chain is Mediator of RNA polymerase II transcription subunit 33A (1309 aa).

The interval 809-829 (QTLNPVNSGTSSSSGAASEDS) is disordered. Residues 816–826 (SGTSSSSGAAS) are compositionally biased toward low complexity.

Belongs to the Mediator complex subunit 33 family. In terms of assembly, component of the Mediator complex.

The protein localises to the nucleus. In terms of biological role, component of the Mediator complex, a coactivator involved in the regulated transcription of nearly all RNA polymerase II-dependent genes. Mediator functions as a bridge to convey information from gene-specific regulatory proteins to the basal RNA polymerase II transcription machinery. The Mediator complex, having a compact conformation in its free form, is recruited to promoters by direct interactions with regulatory proteins and serves for the assembly of a functional preinitiation complex with RNA polymerase II and the general transcription factors. Involved in the repression of phenylpropanoid biosynthesis. May compete with MED33B for common binding partners or for occupancy in Mediator. The protein is Mediator of RNA polymerase II transcription subunit 33A (MED33A) of Arabidopsis thaliana (Mouse-ear cress).